The following is a 654-amino-acid chain: Protein SERAC1 (654 aa).

The chain crosses the membrane as a helical span at residues 32-54; that stretch reads NIIKFTGSLILGGSLFLTYEVLA.

The protein belongs to the SERAC1 family. In terms of tissue distribution, widely expressed, with predominant expression in skeletal muscle and brain. In the brain, highest levels are found in the frontal and occipital cortices, cerebellum and hippocampus.

It is found in the mitochondrion membrane. Its subcellular location is the endoplasmic reticulum. It localises to the mitochondrion. Facilitates the transport of serine from the cytosol to the mitochondria by interacting with and stabilizing Sideroflexin-1 (SFXN1), a mitochondrial serine transporter, playing a fundamental role in the one-carbon cycle responsible for the synthesis of nucleotides needed for mitochondrial DNA replication. Plays an important role in the phosphatidylglycerol (PG) remodeling that is essential for both mitochondrial function and intracellular cholesterol trafficking. Specifically involved in the exchange of the sn-1 acyl chain from PG 16:0/18:1(9Z) (also known as 1-hexadecanoyl-2-(9Z-octadecenoyl)-sn-glycero-3-phospho-(1'-sn-glycerol)) to PG 18:0/18:1(9Z) (also known as 1-octadecanoyl-2-(9Z-octadecenoyl)-sn-glycero-3-phospho-(1'-sn-glycerol)), a step needed in the bis(monoacylglycerol)phosphate biosynthetic pathway. May have acyltransferase activity although the mechanism for PG remodeling has not been determined. The chain is Protein SERAC1 (SERAC1) from Homo sapiens (Human).